The following is a 264-amino-acid chain: Phosphatidylinositol transfer protein 1 (264 aa).

The disordered stretch occupies residues 151–174; that stretch reads NYKETEDPTKIRSEKANRGPLEEE. Positions 238–264 form a coiled coil; sequence VRAFELKTKEDLKKKLEEKDENKAAEK.

It belongs to the PtdIns transfer protein family. PI transfer class I subfamily. Phosphorylated in response to activation of rasG.

It localises to the cytoplasm. Its subcellular location is the golgi apparatus. Catalyzes the transfer of PtdIns and phosphatidylcholine between membranes. The chain is Phosphatidylinositol transfer protein 1 (pitA) from Dictyostelium discoideum (Social amoeba).